Consider the following 137-residue polypeptide: Basic phospholipase A2 PeBP(R)-I/II (137 aa).

A signal peptide spans 1 to 16 (MRTLWIMAVLLLGVEG). Cystine bridges form between C42/C131, C44/C60, C59/C111, C65/C137, C66/C104, C73/C97, and C91/C102. H63 is a catalytic residue. Residue D105 is part of the active site.

Belongs to the phospholipase A2 family. Group II subfamily. R49 sub-subfamily. Expressed by the venom gland.

The protein resides in the secreted. The catalysed reaction is a 1,2-diacyl-sn-glycero-3-phosphocholine + H2O = a 1-acyl-sn-glycero-3-phosphocholine + a fatty acid + H(+). Snake venom phospholipases A2 that have myotoxic, and edema-inducing activity, as well as extremely weak lipolytic activity. PLA2 catalyzes the calcium-dependent hydrolysis of the 2-acyl groups in 3-sn-phosphoglycerides. The chain is Basic phospholipase A2 PeBP(R)-I/II from Protobothrops elegans (Elegant pitviper).